The primary structure comprises 543 residues: UPF0324 membrane protein RB9488 (543 aa).

Positions Met1–Asp22 are enriched in low complexity. Residues Met1–Leu41 form a disordered region. Residues Trp51–Pro73 traverse the membrane as a helical segment. The tract at residues Val91–Ala120 is disordered. 11 helical membrane-spanning segments follow: residues Ile160 to Asn182, Ala189 to Gly211, Glu221 to Leu243, Leu270 to Tyr292, Asn307 to Cys329, Leu336 to Ile358, Gly368 to Gly390, Ile403 to Phe422, Ile437 to Tyr459, Thr479 to Thr496, and Leu511 to Phe533.

It belongs to the UPF0324 family.

The protein localises to the cell membrane. In Rhodopirellula baltica (strain DSM 10527 / NCIMB 13988 / SH1), this protein is UPF0324 membrane protein RB9488.